Consider the following 141-residue polypeptide: Large ribosomal subunit protein uL11 (141 aa).

It belongs to the universal ribosomal protein uL11 family. Part of the ribosomal stalk of the 50S ribosomal subunit. Interacts with L10 and the large rRNA to form the base of the stalk. L10 forms an elongated spine to which L12 dimers bind in a sequential fashion forming a multimeric L10(L12)X complex. In terms of processing, one or more lysine residues are methylated.

Functionally, forms part of the ribosomal stalk which helps the ribosome interact with GTP-bound translation factors. The polypeptide is Large ribosomal subunit protein uL11 (Amoebophilus asiaticus (strain 5a2)).